Here is a 234-residue protein sequence, read N- to C-terminus: tRNA1(Val) (adenine(37)-N6)-methyltransferase (234 aa).

This sequence belongs to the methyltransferase superfamily. tRNA (adenine-N(6)-)-methyltransferase family.

The protein localises to the cytoplasm. The enzyme catalyses adenosine(37) in tRNA1(Val) + S-adenosyl-L-methionine = N(6)-methyladenosine(37) in tRNA1(Val) + S-adenosyl-L-homocysteine + H(+). In terms of biological role, specifically methylates the adenine in position 37 of tRNA(1)(Val) (anticodon cmo5UAC). In Aliivibrio fischeri (strain ATCC 700601 / ES114) (Vibrio fischeri), this protein is tRNA1(Val) (adenine(37)-N6)-methyltransferase.